A 160-amino-acid polypeptide reads, in one-letter code: D-aminoacyl-tRNA deacylase (160 aa).

The short motif at 137–138 (GP) is the Gly-cisPro motif, important for rejection of L-amino acids element.

This sequence belongs to the DTD family. In terms of assembly, homodimer.

It is found in the cytoplasm. It catalyses the reaction glycyl-tRNA(Ala) + H2O = tRNA(Ala) + glycine + H(+). The catalysed reaction is a D-aminoacyl-tRNA + H2O = a tRNA + a D-alpha-amino acid + H(+). Its function is as follows. An aminoacyl-tRNA editing enzyme that deacylates mischarged D-aminoacyl-tRNAs. Also deacylates mischarged glycyl-tRNA(Ala), protecting cells against glycine mischarging by AlaRS. Acts via tRNA-based rather than protein-based catalysis; rejects L-amino acids rather than detecting D-amino acids in the active site. By recycling D-aminoacyl-tRNA to D-amino acids and free tRNA molecules, this enzyme counteracts the toxicity associated with the formation of D-aminoacyl-tRNA entities in vivo and helps enforce protein L-homochirality. This Chloroflexus aurantiacus (strain ATCC 29364 / DSM 637 / Y-400-fl) protein is D-aminoacyl-tRNA deacylase.